Here is a 396-residue protein sequence, read N- to C-terminus: Acetate kinase (396 aa).

N8 serves as a coordination point for Mg(2+). K15 contacts ATP. Residue R89 coordinates substrate. The active-site Proton donor/acceptor is the D146. ATP contacts are provided by residues 206 to 210 (HLGNG), 280 to 282 (DMR), and 328 to 332 (GVGEN). Mg(2+) is bound at residue E382.

This sequence belongs to the acetokinase family. As to quaternary structure, homodimer. It depends on Mg(2+) as a cofactor. Mn(2+) serves as cofactor.

Its subcellular location is the cytoplasm. It catalyses the reaction acetate + ATP = acetyl phosphate + ADP. Its pathway is metabolic intermediate biosynthesis; acetyl-CoA biosynthesis; acetyl-CoA from acetate: step 1/2. Catalyzes the formation of acetyl phosphate from acetate and ATP. Can also catalyze the reverse reaction. This chain is Acetate kinase, found in Clavibacter michiganensis subsp. michiganensis (strain NCPPB 382).